Consider the following 115-residue polypeptide: Viral Lymphotactin (115 aa).

The first 19 residues, Met1–Ser19, serve as a signal peptide directing secretion. Cysteines 30 and 67 form a disulfide.

This sequence belongs to the intercrine gamma family. In terms of assembly, interacts with host XCR1. Post-translationally, N-glycosylated and O-glycosylated.

It localises to the secreted. Its function is as follows. Chemoattractant for CD4-dendritic cells, but not for CD4+ dendritic cells, T-cells or B-cells. The chain is Viral Lymphotactin (vXCL1) from Rat cytomegalovirus (isolate England) (RCMV-E).